A 569-amino-acid chain; its full sequence is Pyrophosphate--fructose 6-phosphate 1-phosphotransferase subunit beta (569 aa).

Glycine 107 is a binding site for diphosphate. Residue aspartate 201 participates in Mg(2+) binding. Substrate contacts are provided by residues 229–231 (TID), 268–269 (KY), 276–278 (MGR), glutamate 337, and 442–445 (YEGR). Aspartate 231 serves as the catalytic Proton acceptor.

This sequence belongs to the phosphofructokinase type A (PFKA) family. PPi-dependent PFK group II subfamily. Clade 'Long' sub-subfamily. As to quaternary structure, tetramer of two alpha (regulatory) and two beta (catalytic) chains. Mg(2+) serves as cofactor.

Its subcellular location is the cytoplasm. The catalysed reaction is beta-D-fructose 6-phosphate + diphosphate = beta-D-fructose 1,6-bisphosphate + phosphate + H(+). The protein operates within carbohydrate degradation; glycolysis; D-glyceraldehyde 3-phosphate and glycerone phosphate from D-glucose: step 3/4. Allosterically activated by fructose 2,6-bisphosphate. Catalytic subunit of pyrophosphate--fructose 6-phosphate 1-phosphotransferase. Catalyzes the phosphorylation of D-fructose 6-phosphate, the first committing step of glycolysis. Uses inorganic phosphate (PPi) as phosphoryl donor instead of ATP like common ATP-dependent phosphofructokinases (ATP-PFKs), which renders the reaction reversible, and can thus function both in glycolysis and gluconeogenesis. This Solanum tuberosum (Potato) protein is Pyrophosphate--fructose 6-phosphate 1-phosphotransferase subunit beta.